A 670-amino-acid polypeptide reads, in one-letter code: tRNA 5-methylaminomethyl-2-thiouridine biosynthesis bifunctional protein MnmC (670 aa).

The tract at residues 1–242 (MTFSVQHAEI…KRECLSGLKI (242 aa)) is tRNA (mnm(5)s(2)U34)-methyltransferase. Residues 269–670 (IGGGIASLCA…KKWLKGSKVE (402 aa)) form an FAD-dependent cmnm(5)s(2)U34 oxidoreductase region.

The protein in the N-terminal section; belongs to the methyltransferase superfamily. tRNA (mnm(5)s(2)U34)-methyltransferase family. It in the C-terminal section; belongs to the DAO family. It depends on FAD as a cofactor.

It localises to the cytoplasm. It carries out the reaction 5-aminomethyl-2-thiouridine(34) in tRNA + S-adenosyl-L-methionine = 5-methylaminomethyl-2-thiouridine(34) in tRNA + S-adenosyl-L-homocysteine + H(+). Catalyzes the last two steps in the biosynthesis of 5-methylaminomethyl-2-thiouridine (mnm(5)s(2)U) at the wobble position (U34) in tRNA. Catalyzes the FAD-dependent demodification of cmnm(5)s(2)U34 to nm(5)s(2)U34, followed by the transfer of a methyl group from S-adenosyl-L-methionine to nm(5)s(2)U34, to form mnm(5)s(2)U34. This is tRNA 5-methylaminomethyl-2-thiouridine biosynthesis bifunctional protein MnmC from Haemophilus influenzae (strain PittEE).